A 345-amino-acid chain; its full sequence is IGF-like family receptor 1 (345 aa).

A signal peptide spans 1–20; that stretch reads MGPSWLLWTVAVAVLLLTRA. Topologically, residues 21–163 are extracellular; sequence ASMEASSFCG…SSRPGFVSAS (143 aa). N-linked (GlcNAc...) asparagine glycosylation is present at Asn-87. Residues 106-149 are disordered; it reads VESPGRTHKQCRKKPVPPKDVCPLKPEDAGASSSPGRWSLGQTT. Over residues 111–121 the composition is skewed to basic residues; it reads RTHKQCRKKPV. Residues 136 to 149 are compositionally biased toward polar residues; sequence ASSSPGRWSLGQTT. The helical transmembrane segment at 164–184 threads the bilayer; the sequence is VLPLAVLPLLLVLLLILAVVL. Over 185-345 the chain is Cytoplasmic; sequence LSLFKRKVRS…DALQVLSKLG (161 aa).

As to expression, ubiquitously expressed with higher expression in lymph node. Highly expressed in T-cells and monocytes.

The protein resides in the cell membrane. In terms of biological role, probable cell membrane receptor for the IGF-like family protein IGFL. In Mus musculus (Mouse), this protein is IGF-like family receptor 1 (Igflr1).